The following is a 321-amino-acid chain: MINSFESQKVDNDYKIAAFYSFSPIAEKVITTFLSKLRIIAEKHNVRGTVLVALEGINGTICGPVEGVTAMQKQLDSLDLETPLEIKYSYTSRQAFRRFKARRKNEIVTMGVENVDPCKTTGKYVEPEDWNAFLDDPLTLVIDTRNEYEISVGSFDGAVNPRTDSFREFPEWVDKKLHSLLKKKSFKKIALFCTGGIRCEKASALLLREGFPEVHHLHGGILRYLEEVPENESRWNGECFVFDQRVALNHKLMPGVYKLCFACGMPLSPQDQNGKYYIPSIQCHHCVDLFSDDDRERFRERQRHIARLGERFPGNSIWPSA.

A Rhodanese domain is found at D135 to S233. Catalysis depends on C193, which acts as the Cysteine persulfide intermediate.

The protein belongs to the TrhO family.

It carries out the reaction uridine(34) in tRNA + AH2 + O2 = 5-hydroxyuridine(34) in tRNA + A + H2O. Functionally, catalyzes oxygen-dependent 5-hydroxyuridine (ho5U) modification at position 34 in tRNAs. The chain is tRNA uridine(34) hydroxylase from Prochlorococcus marinus (strain SARG / CCMP1375 / SS120).